The chain runs to 477 residues: Serine/threonine protein phosphatase 2A 55 kDa regulatory subunit B' delta isoform (477 aa).

This sequence belongs to the phosphatase 2A regulatory subunit B56 family. In terms of assembly, PP2A consists of a common heteromeric enzyme, composed of a catalytic subunit (subunits C), a constant regulatory subunit (subunit A), and a variety of regulatory subunits such as subunits B (the R2/B/PR55/B55, R3/B''/PR72/PR130/PR59 and R5/B'/B56 families). Interacts with SRK2E/OST1. Expressed ubiquitously.

The protein resides in the cytoplasm. The B regulatory subunit may modulate substrate selectivity and catalytic activity, and may also direct the localization of the catalytic enzyme to a particular subcellular compartment. This Arabidopsis thaliana (Mouse-ear cress) protein is Serine/threonine protein phosphatase 2A 55 kDa regulatory subunit B' delta isoform (B'DELTA).